A 304-amino-acid polypeptide reads, in one-letter code: Sulfate adenylyltransferase subunit 2 (304 aa).

This sequence belongs to the PAPS reductase family. CysD subfamily. Heterodimer composed of CysD, the smaller subunit, and CysN.

The enzyme catalyses sulfate + ATP + H(+) = adenosine 5'-phosphosulfate + diphosphate. It functions in the pathway sulfur metabolism; hydrogen sulfide biosynthesis; sulfite from sulfate: step 1/3. With CysN forms the ATP sulfurylase (ATPS) that catalyzes the adenylation of sulfate producing adenosine 5'-phosphosulfate (APS) and diphosphate, the first enzymatic step in sulfur assimilation pathway. APS synthesis involves the formation of a high-energy phosphoric-sulfuric acid anhydride bond driven by GTP hydrolysis by CysN coupled to ATP hydrolysis by CysD. The polypeptide is Sulfate adenylyltransferase subunit 2 (Halorhodospira halophila (strain DSM 244 / SL1) (Ectothiorhodospira halophila (strain DSM 244 / SL1))).